Reading from the N-terminus, the 417-residue chain is 3-oxo-isoapionate-4-phosphate decarboxylase (417 aa).

The Mg(2+) site is built by Lys-177, Asp-179, and Glu-180. Residue Lys-177 is modified to N6-carboxylysine.

Belongs to the RuBisCO large chain family. It depends on Mg(2+) as a cofactor.

It catalyses the reaction 3-oxoisoapionate 4-phosphate + H(+) = L-erythrulose 1-phosphate + CO2. It participates in carbohydrate metabolism. In terms of biological role, involved in catabolism of D-apiose. Catalyzes the decarboxylation of 3-oxo-isoapionate 4-phosphate to L-erythrulose 1-phosphate. This Rhizobium etli (strain ATCC 51251 / DSM 11541 / JCM 21823 / NBRC 15573 / CFN 42) protein is 3-oxo-isoapionate-4-phosphate decarboxylase.